We begin with the raw amino-acid sequence, 273 residues long: 2-dehydro-3-deoxyphosphooctonate aldolase (273 aa).

The protein belongs to the KdsA family.

It localises to the cytoplasm. It catalyses the reaction D-arabinose 5-phosphate + phosphoenolpyruvate + H2O = 3-deoxy-alpha-D-manno-2-octulosonate-8-phosphate + phosphate. It functions in the pathway carbohydrate biosynthesis; 3-deoxy-D-manno-octulosonate biosynthesis; 3-deoxy-D-manno-octulosonate from D-ribulose 5-phosphate: step 2/3. The protein operates within bacterial outer membrane biogenesis; lipopolysaccharide biosynthesis. This is 2-dehydro-3-deoxyphosphooctonate aldolase from Citrifermentans bemidjiense (strain ATCC BAA-1014 / DSM 16622 / JCM 12645 / Bem) (Geobacter bemidjiensis).